The chain runs to 480 residues: Altronate oxidoreductase (480 aa).

19 to 30 (ILQFGEGNFLRG) provides a ligand contact to NAD(+).

Belongs to the mannitol dehydrogenase family. UxaB subfamily.

It catalyses the reaction D-altronate + NAD(+) = keto-D-tagaturonate + NADH + H(+). It participates in carbohydrate metabolism; pentose and glucuronate interconversion. This Bacillus subtilis (strain 168) protein is Altronate oxidoreductase.